Here is a 97-residue protein sequence, read N- to C-terminus: Peptide YY (97 aa).

Positions 1-28 (MMSGRRSWPAMATVLLTLLVCLGELVDA) are cleaved as a signal peptide. Ser-41 bears the Phosphoserine mark. Phe-64 bears the Phenylalanine amide mark. A propeptide spanning residues 68 to 97 (DFSEALLSILLFPDREDPPVKSRPEGAYLW) is cleaved from the precursor.

The protein belongs to the NPY family.

It is found in the secreted. This gut peptide inhibits exocrine pancreatic secretion, has a vasoconstrictory action and inhibitis jejunal and colonic mobility. In Bos taurus (Bovine), this protein is Peptide YY (PYY).